Consider the following 198-residue polypeptide: Nucleoside triphosphate pyrophosphatase 1 (198 aa).

Residue aspartate 75 is the Proton acceptor of the active site.

This sequence belongs to the Maf family. A divalent metal cation is required as a cofactor.

The protein localises to the cytoplasm. The catalysed reaction is a ribonucleoside 5'-triphosphate + H2O = a ribonucleoside 5'-phosphate + diphosphate + H(+). The enzyme catalyses a 2'-deoxyribonucleoside 5'-triphosphate + H2O = a 2'-deoxyribonucleoside 5'-phosphate + diphosphate + H(+). Functionally, nucleoside triphosphate pyrophosphatase. May have a dual role in cell division arrest and in preventing the incorporation of modified nucleotides into cellular nucleic acids. This Jannaschia sp. (strain CCS1) protein is Nucleoside triphosphate pyrophosphatase 1.